The following is a 253-amino-acid chain: Indole-3-glycerol phosphate synthase (253 aa).

It belongs to the TrpC family.

The enzyme catalyses 1-(2-carboxyphenylamino)-1-deoxy-D-ribulose 5-phosphate + H(+) = (1S,2R)-1-C-(indol-3-yl)glycerol 3-phosphate + CO2 + H2O. It participates in amino-acid biosynthesis; L-tryptophan biosynthesis; L-tryptophan from chorismate: step 4/5. This is Indole-3-glycerol phosphate synthase from Bacillus cereus (strain ATCC 10987 / NRS 248).